The chain runs to 73 residues: Frenatin 3.1 (73 aa).

An N-terminal signal peptide occupies residues 1–22; it reads MHFLKKSIFLVLFLGLVSLSIC. Residues 23–46 constitute a propeptide that is removed on maturation; sequence EKEKREDQNEEEVDENEEASEEKR. The interval 25 to 45 is disordered; that stretch reads EKREDQNEEEVDENEEASEEK. A compositionally biased stretch (acidic residues) spans 30–42; the sequence is QNEEEVDENEEAS.

Expressed by the skin glands.

The protein localises to the secreted. Antimicrobial peptide with activity against both Gram-positive and Gram-negative bacteria. The sequence is that of Frenatin 3.1 from Nyctimystes infrafrenatus (White-lipped tree frog).